The chain runs to 410 residues: Acetate kinase (410 aa).

Position 7 (N7) interacts with Mg(2+). Residue K14 coordinates ATP. R98 contacts substrate. D155 (proton donor/acceptor) is an active-site residue. ATP-binding positions include 215 to 219, 290 to 292, and 338 to 342; these read HLGNG, DMR, and GIGEN. E392 provides a ligand contact to Mg(2+).

It belongs to the acetokinase family. As to quaternary structure, homodimer. Requires Mg(2+) as cofactor. Mn(2+) serves as cofactor.

It is found in the cytoplasm. The catalysed reaction is acetate + ATP = acetyl phosphate + ADP. It functions in the pathway metabolic intermediate biosynthesis; acetyl-CoA biosynthesis; acetyl-CoA from acetate: step 1/2. Its function is as follows. Catalyzes the formation of acetyl phosphate from acetate and ATP. Can also catalyze the reverse reaction. The protein is Acetate kinase of Kocuria rhizophila (strain ATCC 9341 / DSM 348 / NBRC 103217 / DC2201).